The primary structure comprises 255 residues: DNA polymerase epsilon subunit C (255 aa).

A disordered region spans residues 109–255 (KTSSGLHKLS…DEDEASADDG (147 aa)). A compositionally biased stretch (acidic residues) spans 135–156 (MEEDIPEEDLQEDDEMDVDETE). The span at 171-184 (KASASAKSILSAFK) shows a compositional bias: low complexity. Acidic residues-rich tracts occupy residues 199–219 (TEED…EIDP) and 236–255 (DLDE…ADDG).

As to quaternary structure, heterotetramer. Consists of four subunits: POL2, DPB2, DPB3 and DPB4.

The protein resides in the nucleus. Its function is as follows. As accessory component of the DNA polymerase epsilon (DNA polymerase II) participates in chromosomal DNA replication. This Candida glabrata (strain ATCC 2001 / BCRC 20586 / JCM 3761 / NBRC 0622 / NRRL Y-65 / CBS 138) (Yeast) protein is DNA polymerase epsilon subunit C (DPB3).